The chain runs to 207 residues: Octanoyltransferase (207 aa).

The BPL/LPL catalytic domain occupies Ala27–Ala203. Substrate is bound by residues Arg66–His73, Ser133–Gly135, and Gly146–Ala148. Cys164 (acyl-thioester intermediate) is an active-site residue.

This sequence belongs to the LipB family.

Its subcellular location is the cytoplasm. The catalysed reaction is octanoyl-[ACP] + L-lysyl-[protein] = N(6)-octanoyl-L-lysyl-[protein] + holo-[ACP] + H(+). Its pathway is protein modification; protein lipoylation via endogenous pathway; protein N(6)-(lipoyl)lysine from octanoyl-[acyl-carrier-protein]: step 1/2. Catalyzes the transfer of endogenously produced octanoic acid from octanoyl-acyl-carrier-protein onto the lipoyl domains of lipoate-dependent enzymes. Lipoyl-ACP can also act as a substrate although octanoyl-ACP is likely to be the physiological substrate. In Neisseria gonorrhoeae (strain ATCC 700825 / FA 1090), this protein is Octanoyltransferase.